The primary structure comprises 524 residues: GMP synthase [glutamine-hydrolyzing] (524 aa).

One can recognise a Glutamine amidotransferase type-1 domain in the interval 8–206 (KILILDFGSQ…VRKLCQCEAR (199 aa)). Cys-85 acts as the Nucleophile in catalysis. Catalysis depends on residues His-180 and Glu-182. Residues 207 to 399 (WTTGNIVEDA…LGLPYEMVYR (193 aa)) form the GMPS ATP-PPase domain. Residue 234–240 (SGGVDSS) coordinates ATP.

Homodimer.

It catalyses the reaction XMP + L-glutamine + ATP + H2O = GMP + L-glutamate + AMP + diphosphate + 2 H(+). It functions in the pathway purine metabolism; GMP biosynthesis; GMP from XMP (L-Gln route): step 1/1. Its function is as follows. Catalyzes the synthesis of GMP from XMP. This is GMP synthase [glutamine-hydrolyzing] from Methylococcus capsulatus (strain ATCC 33009 / NCIMB 11132 / Bath).